The sequence spans 490 residues: Cysteine protease 1 (490 aa).

A signal peptide spans 1–31 (MAGGGGKSVAAALAMACFLLILAAFAPPAAA). The propeptide at 32–154 (APPDIMSIIR…EAYRHDGVEA (123 aa)) is activation peptide. Cystine bridges form between Cys-177–Cys-220, Cys-211–Cys-253, Cys-311–Cys-364, Cys-395–Cys-407, and Cys-401–Cys-422. Cys-180 is an active-site residue. Residues His-317 and Asn-339 contribute to the active site. Asn-356 carries an N-linked (GlcNAc...) asparagine glycan. A propeptide spans 379 to 490 (NPKPSPPSPA…FVVLNREDLV (112 aa)) (removed in mature form).

Belongs to the peptidase C1 family. As to expression, highly expressed in the tapetum and developing pollen of the anther locules. Weakly expressed in root and germinating seed, hardly in the anther-less-flower and not detected in leaf.

In terms of biological role, cysteine protease that may play a role in pollen development. May be regulated by the transcription factor UDT1 in developing anthers and play a role in tapetum development. Positively regulated by the transcription factor TDR in developing anthers and may play a role in tapetum programmed cell death (PCD). The protein is Cysteine protease 1 (CP1) of Oryza sativa subsp. japonica (Rice).